A 1320-amino-acid polypeptide reads, in one-letter code: FERM and PDZ domain-containing protein 4 (1320 aa).

The region spanning 33–66 (QVPPYGWEMMTNRDGRDYFINHMTQAIPFDDPRF) is the WW domain. The PDZ domain occupies 78-155 (KVEMRRDPVL…SILLTVIQPY (78 aa)). One can recognise an FERM domain in the interval 204–519 (NVLKVYLENG…GYYRLLVDSR (316 aa)). 6 disordered regions span residues 809–847 (APPP…EIPV), 897–927 (YSPE…QKQS), 949–981 (TEFP…PPKV), 1024–1050 (KRKS…QQGT), 1114–1139 (PRGP…ADDA), and 1204–1274 (GHFS…ATFE). The span at 900–913 (ESSSDSGNETNSSE) shows a compositional bias: low complexity. A compositionally biased stretch (polar residues) spans 1204-1217 (GHFSLQSSQGSSVD). Residues 1223-1232 (GSSSSACATP) show a composition bias toward low complexity.

In terms of assembly, interacts (via C-terminus) with DLG1, DLG2, DLG3 and DLG4/PSD95. Interacts (via N-terminus) with ARHGEF7; the interaction is mediated by the PDZ domain. Interacts with GPSM2 (via TPR repeat region). As to expression, expressed in various regions of the brain, including cortex, hippocampus, cerebellum, olfactory bulb and medial habenular nucleus.

It localises to the cell projection. The protein resides in the dendritic spine. Its function is as follows. Positive regulator of dendritic spine morphogenesis and density. Required for the maintenance of excitatory synaptic transmission. Binds phosphatidylinositol 4,5-bisphosphate. The sequence is that of FERM and PDZ domain-containing protein 4 (Frmpd4) from Mus musculus (Mouse).